We begin with the raw amino-acid sequence, 512 residues long: Bifunctional pantoate ligase/cytidylate kinase (512 aa).

The pantoate--beta-alanine ligase stretch occupies residues 1–276 (MKLQTSADLQ…CGEARLIDHR (276 aa)). 27-34 (MGALHQGH) lines the ATP pocket. Histidine 34 serves as the catalytic Proton donor. Residue glutamine 58 participates in (R)-pantoate binding. Glutamine 58 contributes to the beta-alanine binding site. Residue 147 to 150 (GEKD) participates in ATP binding. Glutamine 153 contributes to the (R)-pantoate binding site. ATP is bound by residues leucine 176 and 184–187 (LSSR). The cytidylate kinase stretch occupies residues 277 to 512 (VLMSRLPILA…VPVEALNADA (236 aa)).

This sequence in the N-terminal section; belongs to the pantothenate synthetase family. In the C-terminal section; belongs to the cytidylate kinase family. Type 1 subfamily.

It is found in the cytoplasm. It catalyses the reaction (R)-pantoate + beta-alanine + ATP = (R)-pantothenate + AMP + diphosphate + H(+). The catalysed reaction is CMP + ATP = CDP + ADP. The enzyme catalyses dCMP + ATP = dCDP + ADP. Its pathway is cofactor biosynthesis; (R)-pantothenate biosynthesis; (R)-pantothenate from (R)-pantoate and beta-alanine: step 1/1. Functionally, catalyzes the condensation of pantoate with beta-alanine in an ATP-dependent reaction via a pantoyl-adenylate intermediate. Its function is as follows. Catalyzes the transfer of a phosphate group from ATP to either CMP or dCMP to form CDP or dCDP and ADP, respectively. The chain is Bifunctional pantoate ligase/cytidylate kinase from Synechococcus sp. (strain RCC307).